Here is a 568-residue protein sequence, read N- to C-terminus: 2-succinyl-5-enolpyruvyl-6-hydroxy-3-cyclohexene-1-carboxylate synthase (568 aa).

This sequence belongs to the TPP enzyme family. MenD subfamily. As to quaternary structure, homodimer. Mg(2+) is required as a cofactor. It depends on Mn(2+) as a cofactor. Thiamine diphosphate serves as cofactor.

The enzyme catalyses isochorismate + 2-oxoglutarate + H(+) = 5-enolpyruvoyl-6-hydroxy-2-succinyl-cyclohex-3-ene-1-carboxylate + CO2. It participates in quinol/quinone metabolism; 1,4-dihydroxy-2-naphthoate biosynthesis; 1,4-dihydroxy-2-naphthoate from chorismate: step 2/7. It functions in the pathway quinol/quinone metabolism; menaquinone biosynthesis. Functionally, catalyzes the thiamine diphosphate-dependent decarboxylation of 2-oxoglutarate and the subsequent addition of the resulting succinic semialdehyde-thiamine pyrophosphate anion to isochorismate to yield 2-succinyl-5-enolpyruvyl-6-hydroxy-3-cyclohexene-1-carboxylate (SEPHCHC). The protein is 2-succinyl-5-enolpyruvyl-6-hydroxy-3-cyclohexene-1-carboxylate synthase of Histophilus somni (strain 2336) (Haemophilus somnus).